Reading from the N-terminus, the 82-residue chain is Small ribosomal subunit protein bS16 (82 aa).

The protein belongs to the bacterial ribosomal protein bS16 family.

The sequence is that of Small ribosomal subunit protein bS16 from Vibrio atlanticus (strain LGP32) (Vibrio splendidus (strain Mel32)).